Consider the following 327-residue polypeptide: Gibberellin 2-beta-dioxygenase 3 (327 aa).

The region spanning Gly-173–Pro-278 is the Fe2OG dioxygenase domain. Tyr-183 serves as a coordination point for 2-oxoglutarate. Fe cation is bound by residues His-202, Asp-204, and His-259. Positions 269 and 271 each coordinate 2-oxoglutarate.

It belongs to the iron/ascorbate-dependent oxidoreductase family. GA2OX subfamily. L-ascorbate is required as a cofactor. Fe(2+) serves as cofactor. As to expression, expressed in roots, shoot apex, leaf blades, leaf sheaths, stems and flowers.

It carries out the reaction gibberellin A1 + 2-oxoglutarate + O2 = gibberellin A8 + succinate + CO2. In terms of biological role, catalyzes the 2-beta-hydroxylation of several biologically active gibberellins, leading to the homeostatic regulation of their endogenous level. Catabolism of gibberellins (GAs) plays a central role in plant development. In vitro, converts GA1, GA20, and GA29 to the corresponding 2-beta-hydroxylated products GA8, GA29-catabolite, respectively. The polypeptide is Gibberellin 2-beta-dioxygenase 3 (Oryza sativa subsp. japonica (Rice)).